A 104-amino-acid chain; its full sequence is Large ribosomal subunit protein bL21 (104 aa).

It belongs to the bacterial ribosomal protein bL21 family. In terms of assembly, part of the 50S ribosomal subunit. Contacts protein L20.

This protein binds to 23S rRNA in the presence of protein L20. The protein is Large ribosomal subunit protein bL21 of Leptospira interrogans serogroup Icterohaemorrhagiae serovar copenhageni (strain Fiocruz L1-130).